The primary structure comprises 240 residues: Probable transcriptional regulatory protein BLi02909/BL01150 (240 aa).

Positions M1 to K14 are enriched in basic residues. The interval M1–R21 is disordered.

The protein belongs to the TACO1 family.

It is found in the cytoplasm. In Bacillus licheniformis (strain ATCC 14580 / DSM 13 / JCM 2505 / CCUG 7422 / NBRC 12200 / NCIMB 9375 / NCTC 10341 / NRRL NRS-1264 / Gibson 46), this protein is Probable transcriptional regulatory protein BLi02909/BL01150.